The primary structure comprises 347 residues: MIKEYYGAETFILNKDFAYILVIGTTDVSLIPGLTIAGATPELTHFTPAADAEYVLLGKCKSINTIPVSPTGIPTPALLTRASLSFINPLKIVVNAGSRILPKIPYIDLQGEPGKDIRKQALSMEKVNNIMENSIKLGEELSNEYELIMIGESIPAGTTTAMATLLALGYDAMDKVSSASPDNPKELKRKVVEEALRNLPTDSLQRLAKVSDPVLLGVAGTSLGFKGKILLAGGTQMTAAAAIINEFDKNKLKDITIGTTKWIVEDKFADMLSLAKQVGVKVLASMLDLSISAYEGIRAYEKGYVKEGVGAGGSAIMALVRGVSNNTLVRKIDELYSELVGSNNLHI.

Belongs to the UPF0284 family.

The protein is UPF0284 protein YN1551_0030 of Saccharolobus islandicus (strain Y.N.15.51 / Yellowstone #2) (Sulfolobus islandicus).